Reading from the N-terminus, the 331-residue chain is Ketol-acid reductoisomerase (NADP(+)) (331 aa).

The KARI N-terminal Rossmann domain maps to alanine 2–threonine 182. NADP(+)-binding positions include tyrosine 25–glutamine 28, serine 51, serine 53, and aspartate 83–glutamine 86. Histidine 108 is an active-site residue. Residue glycine 134 participates in NADP(+) binding. The 146-residue stretch at threonine 183 to leucine 328 folds into the KARI C-terminal knotted domain. Residues aspartate 191, glutamate 195, glutamate 227, and glutamate 231 each coordinate Mg(2+). Serine 252 contacts substrate.

This sequence belongs to the ketol-acid reductoisomerase family. The cofactor is Mg(2+).

It catalyses the reaction (2R)-2,3-dihydroxy-3-methylbutanoate + NADP(+) = (2S)-2-acetolactate + NADPH + H(+). The enzyme catalyses (2R,3R)-2,3-dihydroxy-3-methylpentanoate + NADP(+) = (S)-2-ethyl-2-hydroxy-3-oxobutanoate + NADPH + H(+). It participates in amino-acid biosynthesis; L-isoleucine biosynthesis; L-isoleucine from 2-oxobutanoate: step 2/4. It functions in the pathway amino-acid biosynthesis; L-valine biosynthesis; L-valine from pyruvate: step 2/4. Functionally, involved in the biosynthesis of branched-chain amino acids (BCAA). Catalyzes an alkyl-migration followed by a ketol-acid reduction of (S)-2-acetolactate (S2AL) to yield (R)-2,3-dihydroxy-isovalerate. In the isomerase reaction, S2AL is rearranged via a Mg-dependent methyl migration to produce 3-hydroxy-3-methyl-2-ketobutyrate (HMKB). In the reductase reaction, this 2-ketoacid undergoes a metal-dependent reduction by NADPH to yield (R)-2,3-dihydroxy-isovalerate. The chain is Ketol-acid reductoisomerase (NADP(+)) from Clostridium novyi (strain NT).